The sequence spans 182 residues: Isopentenyl-diphosphate Delta-isomerase (182 aa).

Residues histidine 25 and histidine 32 each coordinate Mn(2+). Residue cysteine 67 is part of the active site. Histidine 69 is a binding site for Mn(2+). Glutamate 87 is a binding site for Mg(2+). Mn(2+) contacts are provided by glutamate 114 and glutamate 116. Glutamate 116 is an active-site residue.

This sequence belongs to the IPP isomerase type 1 family. In terms of assembly, homodimer. It depends on Mg(2+) as a cofactor. Requires Mn(2+) as cofactor.

The protein resides in the cytoplasm. It catalyses the reaction isopentenyl diphosphate = dimethylallyl diphosphate. Its pathway is isoprenoid biosynthesis; dimethylallyl diphosphate biosynthesis; dimethylallyl diphosphate from isopentenyl diphosphate: step 1/1. In terms of biological role, catalyzes the 1,3-allylic rearrangement of the homoallylic substrate isopentenyl (IPP) to its highly electrophilic allylic isomer, dimethylallyl diphosphate (DMAPP). The polypeptide is Isopentenyl-diphosphate Delta-isomerase (Escherichia coli (strain K12 / MC4100 / BW2952)).